The primary structure comprises 465 residues: Cysteine--tRNA ligase (465 aa).

A Zn(2+)-binding site is contributed by Cys-30. The 'HIGH' region signature appears at 32–42; the sequence is ITVYDYCHVGH. Zn(2+) is bound by residues Cys-214, His-239, and Glu-243. The 'KMSKS' region motif lies at 271–275; it reads KMSKS. Lys-274 is a binding site for ATP.

This sequence belongs to the class-I aminoacyl-tRNA synthetase family. Monomer. It depends on Zn(2+) as a cofactor.

It is found in the cytoplasm. The enzyme catalyses tRNA(Cys) + L-cysteine + ATP = L-cysteinyl-tRNA(Cys) + AMP + diphosphate. In Burkholderia orbicola (strain MC0-3), this protein is Cysteine--tRNA ligase.